The primary structure comprises 267 residues: 3-isopropylmalate dehydratase large subunit (267 aa).

[4Fe-4S] cluster contacts are provided by Cys146, Cys206, and Cys209.

This sequence belongs to the aconitase/IPM isomerase family. LeuC type 1 subfamily. In terms of assembly, heterodimer of LeuC and LeuD. [4Fe-4S] cluster is required as a cofactor.

The catalysed reaction is (2R,3S)-3-isopropylmalate = (2S)-2-isopropylmalate. Its pathway is amino-acid biosynthesis; L-leucine biosynthesis; L-leucine from 3-methyl-2-oxobutanoate: step 2/4. Catalyzes the isomerization between 2-isopropylmalate and 3-isopropylmalate, via the formation of 2-isopropylmaleate. The chain is 3-isopropylmalate dehydratase large subunit (leuC) from Cupriavidus necator (Alcaligenes eutrophus).